We begin with the raw amino-acid sequence, 404 residues long: Rhomboid-related protein 3 (404 aa).

2 consecutive EF-hand domains span residues 34–69 and 70–105; these read APED…HSSK and LDPH…KRSN. 7 helical membrane-spanning segments follow: residues 164 to 184, 227 to 247, 250 to 270, 274 to 294, 305 to 324, 338 to 358, and 371 to 391; these read WFMI…GVLL, LGLN…VHGA, IGLV…VADM, VVGS…NIVM, LLRM…RAVW, PSFV…VVVL, and WWIF…WNIF. The active-site Nucleophile is Ser-278. His-343 is an active-site residue.

This sequence belongs to the peptidase S54 family.

It localises to the membrane. The enzyme catalyses Cleaves type-1 transmembrane domains using a catalytic dyad composed of serine and histidine that are contributed by different transmembrane domains.. May be involved in regulated intramembrane proteolysis and the subsequent release of functional polypeptides from their membrane anchors. In Mus musculus (Mouse), this protein is Rhomboid-related protein 3 (Rhbdl3).